Consider the following 356-residue polypeptide: Metacaspase-1 (356 aa).

Residues 1 to 47 are disordered; it reads MYSGRSGAPPPAHSPYPNSYNHGPPGHSAGHNVPPPPPTQPVQFGHG. Residues His-147 and Cys-203 contribute to the active site.

Belongs to the peptidase C14B family.

Its function is as follows. Involved in cell death (apoptosis). In Ajellomyces capsulatus (strain NAm1 / WU24) (Darling's disease fungus), this protein is Metacaspase-1 (MCA1).